Here is a 127-residue protein sequence, read N- to C-terminus: Photosystem II reaction center Psb28 protein (127 aa).

The interval 108-127 (LGYSQSQDSDQTEGADNQQA) is disordered. The segment covering 109 to 127 (GYSQSQDSDQTEGADNQQA) has biased composition (polar residues).

The protein belongs to the Psb28 family. In terms of assembly, part of the photosystem II complex.

The protein localises to the cellular thylakoid membrane. In Synechococcus sp. (strain CC9605), this protein is Photosystem II reaction center Psb28 protein.